Reading from the N-terminus, the 631-residue chain is Bromodomain-containing protein 9 (631 aa).

Disordered stretches follow at residues 1 to 26 and 39 to 116; these read MGKK…PLEK and VTEL…TLPK. 2 stretches are compositionally biased toward basic and acidic residues: residues 9 to 26 and 50 to 63; these read RPEW…PLEK and SYYD…WERH. Residues 64–73 show a composition bias toward basic residues; that stretch reads KEKKKKKKKK. Residues 74-85 are compositionally biased toward basic and acidic residues; that stretch reads SEKEKYADDDER. Over residues 86 to 96 the composition is skewed to basic residues; sequence RRRKEEKKKKR. The Bromo domain occupies 166 to 270; the sequence is NEATPHQQLL…HTGFKMMSKQ (105 aa). The tract at residues 244-246 is histone H4K5ac H4K8ac and histone H4K5bu H4K8bu binding; that stretch reads VYN. Residues 571–631 are disordered; the sequence is ASVDRVGSRP…SPEPGSTANS (61 aa). A compositionally biased stretch (low complexity) spans 581-590; the sequence is SSNLSSLSNA.

As to quaternary structure, binds acetylated histones H3 and H4. Binds butyrylated histone H4.

The protein resides in the nucleus. In terms of biological role, plays a role in chromatin remodeling and regulation of transcription. Acts as a chromatin reader that recognizes and binds acylated histones: binds histones that are acetylated and/or butyrylated. This Danio rerio (Zebrafish) protein is Bromodomain-containing protein 9 (brd9).